The sequence spans 293 residues: 33 kDa chaperonin (293 aa).

Intrachain disulfides connect C237–C239 and C271–C274.

Belongs to the HSP33 family. Under oxidizing conditions two disulfide bonds are formed involving the reactive cysteines. Under reducing conditions zinc is bound to the reactive cysteines and the protein is inactive.

The protein resides in the cytoplasm. Its function is as follows. Redox regulated molecular chaperone. Protects both thermally unfolding and oxidatively damaged proteins from irreversible aggregation. Plays an important role in the bacterial defense system toward oxidative stress. The polypeptide is 33 kDa chaperonin (Haemophilus influenzae (strain 86-028NP)).